A 398-amino-acid polypeptide reads, in one-letter code: Acetate kinase (398 aa).

Asparagine 7 provides a ligand contact to Mg(2+). ATP is bound at residue lysine 14. Arginine 91 serves as a coordination point for substrate. Aspartate 148 serves as the catalytic Proton donor/acceptor. Residues histidine 208 to glycine 212, aspartate 283 to arginine 285, and glycine 331 to asparagine 335 contribute to the ATP site. Glutamate 385 provides a ligand contact to Mg(2+).

It belongs to the acetokinase family. Homodimer. Mg(2+) is required as a cofactor. It depends on Mn(2+) as a cofactor.

It is found in the cytoplasm. It carries out the reaction acetate + ATP = acetyl phosphate + ADP. It functions in the pathway metabolic intermediate biosynthesis; acetyl-CoA biosynthesis; acetyl-CoA from acetate: step 1/2. Functionally, catalyzes the formation of acetyl phosphate from acetate and ATP. Can also catalyze the reverse reaction. This Porphyromonas gingivalis (strain ATCC BAA-308 / W83) protein is Acetate kinase.